A 529-amino-acid chain; its full sequence is Peptide chain release factor 3 (529 aa).

In terms of domain architecture, tr-type G spans 11–280; the sequence is NKRRTFAIIS…GLTKWAPTPL (270 aa). Residues 20–27, 88–92, and 142–145 contribute to the GTP site; these read SHPDAGKT, DTPGH, and NKCD.

The protein belongs to the TRAFAC class translation factor GTPase superfamily. Classic translation factor GTPase family. PrfC subfamily.

It localises to the cytoplasm. Functionally, increases the formation of ribosomal termination complexes and stimulates activities of RF-1 and RF-2. It binds guanine nucleotides and has strong preference for UGA stop codons. It may interact directly with the ribosome. The stimulation of RF-1 and RF-2 is significantly reduced by GTP and GDP, but not by GMP. This Pseudoalteromonas translucida (strain TAC 125) protein is Peptide chain release factor 3.